The following is a 100-amino-acid chain: Elastin (100 aa).

4-hydroxyproline is present on residues proline 72 and proline 86. Cysteines 90 and 95 form a disulfide.

The protein belongs to the elastin family. As to quaternary structure, the polymeric elastin chains are cross-linked together into an extensible 3D network. Forms a ternary complex with BGN and MFAP2. Interacts with MFAP2 via divalent cations (calcium &gt; magnesium &gt; manganese) in a dose-dependent and saturating manner. Interacts with FBLN5 and FBN1. Forms a ternary complex with FBN1 and FBLN2 or FBLN5. Interacts with MFAP4 in a Ca (2+)-dependent manner; this interaction promotes ELN self-assembly. Interacts with EFEMP2 with moderate affinity. In terms of processing, elastin is formed through the cross-linking of its soluble precursor tropoelastin. Cross-linking is initiated through the action of lysyl oxidase on exposed lysines to form allysine. Subsequent spontaneous condensation reactions with other allysine or unmodified lysine residues result in various bi-, tri-, and tetrafunctional cross-links. The most abundant cross-links in mature elastin fibers are lysinonorleucine, allysine aldol, desmosine, and isodesmosine. Hydroxylation on proline residues within the sequence motif, GXPG, is most likely to be 4-hydroxy as this fits the requirement for 4-hydroxylation in vertebrates.

It localises to the secreted. The protein localises to the extracellular space. It is found in the extracellular matrix. Major structural protein of tissues such as aorta and nuchal ligament, which must expand rapidly and recover completely. Molecular determinant of the late arterial morphogenesis, stabilizing arterial structure by regulating proliferation and organization of vascular smooth muscle. The polypeptide is Elastin (ELN) (Ovis aries (Sheep)).